Reading from the N-terminus, the 184-residue chain is Ribosome-recycling factor (184 aa).

The protein belongs to the RRF family.

The protein resides in the cytoplasm. In terms of biological role, responsible for the release of ribosomes from messenger RNA at the termination of protein biosynthesis. May increase the efficiency of translation by recycling ribosomes from one round of translation to another. The chain is Ribosome-recycling factor from Fervidobacterium nodosum (strain ATCC 35602 / DSM 5306 / Rt17-B1).